The primary structure comprises 123 residues: Ribonuclease P protein component (123 aa).

The protein belongs to the RnpA family. In terms of assembly, consists of a catalytic RNA component (M1 or rnpB) and a protein subunit.

It catalyses the reaction Endonucleolytic cleavage of RNA, removing 5'-extranucleotides from tRNA precursor.. RNaseP catalyzes the removal of the 5'-leader sequence from pre-tRNA to produce the mature 5'-terminus. It can also cleave other RNA substrates such as 4.5S RNA. The protein component plays an auxiliary but essential role in vivo by binding to the 5'-leader sequence and broadening the substrate specificity of the ribozyme. This Streptomyces griseus subsp. griseus (strain JCM 4626 / CBS 651.72 / NBRC 13350 / KCC S-0626 / ISP 5235) protein is Ribonuclease P protein component.